A 217-amino-acid chain; its full sequence is Ribonuclease T (217 aa).

An Exonuclease domain is found at 20–195; it reads VVVDVETAGF…YDTEKTAELF (176 aa). Residues D23, E25, H182, and D187 each contribute to the Mg(2+) site. H182 functions as the Proton donor/acceptor in the catalytic mechanism.

This sequence belongs to the RNase T family. In terms of assembly, homodimer. It depends on Mg(2+) as a cofactor.

Functionally, trims short 3' overhangs of a variety of RNA species, leaving a one or two nucleotide 3' overhang. Responsible for the end-turnover of tRNA: specifically removes the terminal AMP residue from uncharged tRNA (tRNA-C-C-A). Also appears to be involved in tRNA biosynthesis. The polypeptide is Ribonuclease T (Vibrio vulnificus (strain CMCP6)).